Here is a 300-residue protein sequence, read N- to C-terminus: GTPase Era (300 aa).

In terms of domain architecture, Era-type G spans 7 to 182 (YCGFIAIVGR…LRKGVHHFPE (176 aa)). Positions 15 to 22 (GRPNVGKS) are G1. 15–22 (GRPNVGKS) is a binding site for GTP. Residues 41-45 (QTTRH) form a G2 region. The G3 stretch occupies residues 62 to 65 (DTPG). Residues 62 to 66 (DTPGL) and 124 to 127 (NKVD) contribute to the GTP site. Positions 124–127 (NKVD) are G4. Residues 154 to 156 (ISA) are G5. Positions 206 to 283 (TGEELPYSVT…HLELWVKVKS (78 aa)) constitute a KH type-2 domain.

It belongs to the TRAFAC class TrmE-Era-EngA-EngB-Septin-like GTPase superfamily. Era GTPase family. As to quaternary structure, monomer.

The protein resides in the cytoplasm. Its subcellular location is the cell inner membrane. An essential GTPase that binds both GDP and GTP, with rapid nucleotide exchange. Plays a role in 16S rRNA processing and 30S ribosomal subunit biogenesis and possibly also in cell cycle regulation and energy metabolism. This is GTPase Era from Histophilus somni (strain 129Pt) (Haemophilus somnus).